Reading from the N-terminus, the 498-residue chain is Flavin-dependent halogenase otaD (498 aa).

FAD contacts are provided by G14, G17, and E47. Positions 326 and 327 each coordinate chloride. Residue V328 coordinates FAD.

Belongs to the flavin-dependent halogenase family.

It catalyses the reaction ochratoxin B + FADH2 + chloride + O2 = ochratoxin A + FAD + 2 H2O. It participates in mycotoxin biosynthesis. Its function is as follows. Flavin-dependent halogenase; part of the gene cluster that mediates the biosynthesis of ochratoxin A (OTA), a mycotoxin composed of a chlorinated type I polyketide dihydroisocoumarin moiety linked to L-phenylalanine, and demonstrated to have nephrotoxic, immunotoxic, genotoxic, neurotoxic, and teratogenic properties. OtaD chlorinates ochratoxin B (OTB) at the C-5 position to form OTA. The pathway begins with the highly reducing polyketide synthase otaA that catalyzes the formation of the isocoumarin group during the initial stages of biosynthesis, starting from one acetate and 4 malonate units, to originate the characteristic pentaketide skeleton 7-methylmellein (7-MM) of the OTA molecule. The newly identified cyclase otaY might be involved in the polyketide cyclization reaction during the initial steps of the OTA biosynthesis. 7-MM is then oxidized into 7-carboxymellein (also called ochratoxin beta) by the cytochrome P450 monooxygenase otaC. The NRPS encoded by the otaB gene is involved in the linking of phenylalanine to the dihydroisocoumarin ring. The reaction catalyzed by NRPS results in the production of ochratoxin B (OTB), which is the non-chlorinated analog of OTA and which subsequently serves as the substrate of the halogenase otaD for chlorination activity to form the final molecular structure of OTA, containing a chlorine atom in the C-5 position of the molecule. The chain is Flavin-dependent halogenase otaD from Aspergillus carbonarius (strain ITEM 5010).